The sequence spans 198 residues: 3-isopropylmalate dehydratase small subunit (198 aa).

This sequence belongs to the LeuD family. LeuD type 1 subfamily. Heterodimer of LeuC and LeuD.

It carries out the reaction (2R,3S)-3-isopropylmalate = (2S)-2-isopropylmalate. It functions in the pathway amino-acid biosynthesis; L-leucine biosynthesis; L-leucine from 3-methyl-2-oxobutanoate: step 2/4. In terms of biological role, catalyzes the isomerization between 2-isopropylmalate and 3-isopropylmalate, via the formation of 2-isopropylmaleate. The polypeptide is 3-isopropylmalate dehydratase small subunit (Mycobacterium marinum (strain ATCC BAA-535 / M)).